A 174-amino-acid chain; its full sequence is Protein GrpE (174 aa).

The interval 1–35 is disordered; it reads MAQDIKNEEVEEVQEEEVVKTAEETTPEKSELDLA. Positions 17-35 are enriched in basic and acidic residues; it reads EVVKTAEETTPEKSELDLA.

This sequence belongs to the GrpE family. As to quaternary structure, homodimer.

Its subcellular location is the cytoplasm. Participates actively in the response to hyperosmotic and heat shock by preventing the aggregation of stress-denatured proteins, in association with DnaK and GrpE. It is the nucleotide exchange factor for DnaK and may function as a thermosensor. Unfolded proteins bind initially to DnaJ; upon interaction with the DnaJ-bound protein, DnaK hydrolyzes its bound ATP, resulting in the formation of a stable complex. GrpE releases ADP from DnaK; ATP binding to DnaK triggers the release of the substrate protein, thus completing the reaction cycle. Several rounds of ATP-dependent interactions between DnaJ, DnaK and GrpE are required for fully efficient folding. In Streptococcus pneumoniae serotype 4 (strain ATCC BAA-334 / TIGR4), this protein is Protein GrpE.